A 311-amino-acid chain; its full sequence is GPN-loop GTPase 2 (311 aa).

Position 20 to 25 (20 to 25 (GSGKTT)) interacts with GTP. Positions 77-79 (GPN) match the Gly-Pro-Asn (GPN)-loop; involved in dimer interface motif. 179–182 (SKMD) is a binding site for GTP.

It belongs to the GPN-loop GTPase family. As to quaternary structure, heterodimers with gpn1 or gpn3. Binds to RNA polymerase II (RNAPII).

Small GTPase required for proper localization of RNA polymerase II and III (RNAPII and RNAPIII). May act at an RNAP assembly step prior to nuclear import. The chain is GPN-loop GTPase 2 from Danio rerio (Zebrafish).